Consider the following 186-residue polypeptide: Translation initiation factor IF-3 (186 aa).

Residues 1–20 (MINRNSGKDRDRSRSGDKEL) are disordered.

Belongs to the IF-3 family. In terms of assembly, monomer.

The protein resides in the cytoplasm. IF-3 binds to the 30S ribosomal subunit and shifts the equilibrium between 70S ribosomes and their 50S and 30S subunits in favor of the free subunits, thus enhancing the availability of 30S subunits on which protein synthesis initiation begins. The protein is Translation initiation factor IF-3 of Borrelia duttonii (strain Ly).